A 932-amino-acid chain; its full sequence is 2-oxoglutarate dehydrogenase E1 component (932 aa).

This sequence belongs to the alpha-ketoglutarate dehydrogenase family. As to quaternary structure, homodimer. Part of the 2-oxoglutarate dehydrogenase (OGDH) complex composed of E1 (2-oxoglutarate dehydrogenase), E2 (dihydrolipoamide succinyltransferase) and E3 (dihydrolipoamide dehydrogenase); the complex contains multiple copies of the three enzymatic components (E1, E2 and E3). Requires thiamine diphosphate as cofactor.

The catalysed reaction is N(6)-[(R)-lipoyl]-L-lysyl-[protein] + 2-oxoglutarate + H(+) = N(6)-[(R)-S(8)-succinyldihydrolipoyl]-L-lysyl-[protein] + CO2. In terms of biological role, E1 component of the 2-oxoglutarate dehydrogenase (OGDH) complex which catalyzes the decarboxylation of 2-oxoglutarate, the first step in the conversion of 2-oxoglutarate to succinyl-CoA and CO(2). The protein is 2-oxoglutarate dehydrogenase E1 component of Staphylococcus aureus (strain JH9).